A 246-amino-acid polypeptide reads, in one-letter code: Aspartate/glutamate leucyltransferase (246 aa).

The protein belongs to the R-transferase family. Bpt subfamily.

Its subcellular location is the cytoplasm. The catalysed reaction is N-terminal L-glutamyl-[protein] + L-leucyl-tRNA(Leu) = N-terminal L-leucyl-L-glutamyl-[protein] + tRNA(Leu) + H(+). It carries out the reaction N-terminal L-aspartyl-[protein] + L-leucyl-tRNA(Leu) = N-terminal L-leucyl-L-aspartyl-[protein] + tRNA(Leu) + H(+). Functions in the N-end rule pathway of protein degradation where it conjugates Leu from its aminoacyl-tRNA to the N-termini of proteins containing an N-terminal aspartate or glutamate. In Rhodospirillum rubrum (strain ATCC 11170 / ATH 1.1.1 / DSM 467 / LMG 4362 / NCIMB 8255 / S1), this protein is Aspartate/glutamate leucyltransferase.